The primary structure comprises 455 residues: Protein YmfN (455 aa).

Belongs to the phage terminase family.

This is Protein YmfN (ymfN) from Escherichia coli (strain K12).